Consider the following 568-residue polypeptide: MGSDGDKKKKFIVAGSVSGFLVIMVVSVAVVTSKHSPKDDENHIRKTTKAVQAVCAPTDFKDTCVNSLMGASPDSDDPVDLIKLGFKVTIKSINESLEKASGDIKAKADKNPEAKGAFELCEKLMIDAIDDLKKCMDHGFSVDQIEVFVEDLRVWLSGSIAFQQTCMDSFGEIKSNLMQDMLKIFKTSRELSSNSLAMVTRISTLIPNSNLTGLTGALAKYARKLLSTEDSIPTWVGPEARRLMAAQGGGPGPVKANAVVAQDGTGQFKTITDALNAVPKGNKVPFIIHIKEGIYKEKVTVTKKMPHVTFIGDGPNKTLITGSLNFGIGKVKTFLTATITIEGDHFTAKNIGIENTAGPEGGQAVALRVSADYAVFHSCQIDGHQDTLYVHSHRQFYRDCTVSGTVDFIFGDAKCILQNCKIVVRKPNKGQTCMVTAQGRSNVRESTGLVLHGCHITGDPAYIPMKSVNKAYLGRPWKEFSRTIIMKTTIDDVIDPAGWLPWSGDFALKTLYYAEHMNTGPGSNQAQRVKWPGIKKLTPQDALLYTGDRFLRGDTWIPQTQVPYTAKV.

The N-terminal stretch at 1 to 33 (MGSDGDKKKKFIVAGSVSGFLVIMVVSVAVVTS) is a signal peptide. The pectinesterase inhibitor 23 stretch occupies residues 45–198 (RKTTKAVQAV…RELSSNSLAM (154 aa)). N-linked (GlcNAc...) asparagine glycosylation is found at N94, N210, and N316. The pectinesterase 23 stretch occupies residues 251–548 (PGPVKANAVV…PQDALLYTGD (298 aa)). Residues T333 and Q363 each contribute to the substrate site. The active-site Proton donor; for pectinesterase activity is the D386. A disulfide bridge connects residues C400 and C420. Residue D407 is the Nucleophile; for pectinesterase activity of the active site. R475 and W477 together coordinate substrate.

It in the N-terminal section; belongs to the PMEI family. The protein in the C-terminal section; belongs to the pectinesterase family. As to expression, expressed in mature pollen grains in the anthers and on the stigma. Found in pollen tubes within the style.

It is found in the secreted. The protein localises to the cell wall. It carries out the reaction [(1-&gt;4)-alpha-D-galacturonosyl methyl ester](n) + n H2O = [(1-&gt;4)-alpha-D-galacturonosyl](n) + n methanol + n H(+). It functions in the pathway glycan metabolism; pectin degradation; 2-dehydro-3-deoxy-D-gluconate from pectin: step 1/5. Functionally, acts in the modification of cell walls via demethylesterification of cell wall pectin. This chain is Probable pectinesterase/pectinesterase inhibitor 23 (PME23), found in Arabidopsis thaliana (Mouse-ear cress).